The chain runs to 102 residues: Small ribosomal subunit protein uS10 (102 aa).

The protein belongs to the universal ribosomal protein uS10 family. As to quaternary structure, part of the 30S ribosomal subunit.

In terms of biological role, involved in the binding of tRNA to the ribosomes. This Methylobacterium radiotolerans (strain ATCC 27329 / DSM 1819 / JCM 2831 / NBRC 15690 / NCIMB 10815 / 0-1) protein is Small ribosomal subunit protein uS10.